The primary structure comprises 450 residues: Chromosomal replication initiator protein DnaA (450 aa).

The domain I, interacts with DnaA modulators stretch occupies residues 1–84 (MENIHDLWDR…AVKFIIPPNQ (84 aa)). The segment at 84–111 (QDDEELEFQSSKKKQRKPYEETNDFPQS) is domain II. The interval 89 to 108 (LEFQSSKKKQRKPYEETNDF) is disordered. Positions 112-328 (MLNPKYTFDT…GALIRVVAYS (217 aa)) are domain III, AAA+ region. ATP is bound by residues Gly-156, Gly-158, Lys-159, and Thr-160. A domain IV, binds dsDNA region spans residues 329-450 (SLINKEITAD…QEIQEKLKQL (122 aa)).

The protein belongs to the DnaA family. Oligomerizes as a right-handed, spiral filament on DNA at oriC.

The protein resides in the cytoplasm. Its function is as follows. Plays an essential role in the initiation and regulation of chromosomal replication. ATP-DnaA binds to the origin of replication (oriC) to initiate formation of the DNA replication initiation complex once per cell cycle. Binds the DnaA box (a 9 base pair repeat at the origin) and separates the double-stranded (ds)DNA. Forms a right-handed helical filament on oriC DNA; dsDNA binds to the exterior of the filament while single-stranded (ss)DNA is stabiized in the filament's interior. The ATP-DnaA-oriC complex binds and stabilizes one strand of the AT-rich DNA unwinding element (DUE), permitting loading of DNA polymerase. After initiation quickly degrades to an ADP-DnaA complex that is not apt for DNA replication. Binds acidic phospholipids. This chain is Chromosomal replication initiator protein DnaA, found in Geobacillus kaustophilus (strain HTA426).